The primary structure comprises 246 residues: Transmembrane protein 41 homolog (246 aa).

The next 6 membrane-spanning stretches (helical) occupy residues 12 to 32 (WLVLLIFATFAVSIFAVYSNF), 68 to 88 (SVVLCGVIVVYVFLQSFAIPG), 101 to 123 (PFYVAIVLVCSCSATGAAICYTI), 159 to 179 (IFLRVTPIVPNWLINIASPVL), 182 to 202 (PLAPFFWGTFLGVAPPSFLYI), and 219 to 239 (SWSSIVLLTGSAILSLAPILL).

This sequence belongs to the TMEM41 family.

The protein localises to the membrane. The chain is Transmembrane protein 41 homolog (tag-175) from Caenorhabditis elegans.